We begin with the raw amino-acid sequence, 415 residues long: MTNKIIIPTTGDKITFIDGKLSVPNNPIIPYIEGDGIGVDVTPPMLKVVNAAVAKAYGGDRKIEWLEVYAGEKATKMYDSETWLPEETLNILQEYKVSIKGPLTTPVGGGMSSLNVAIRQMLDLYVCQRPVQWFTGVPSPVKRPSEVDMVIFRENTEDIYAGIEYKAGSDKAKSVIKFLIEEMGASNIRFTENCGIGIKPVSKEGSQRLVRQAIQYAIDNNKDSVTLVHKGNIMKFTEGAFKDWGYELAIEEFGASLLHGGPWCSLKNPNTGKEIIIKDVIADAMLQQVLLRPAEYSVIATLNLNGDYLSDALAAQVGGIGIAPGANLGDEVAVFEATHGTAPKYAGKNKVNPGSVILSAEMMLRHMGWLEADLLLKGMSGAIQAKTVTYDFERLMDDATLVSCSAFGDCIIDHM.

Residue Thr-104 coordinates NADP(+). Ser-113, Asn-115, Arg-119, Arg-129, and Arg-153 together coordinate D-threo-isocitrate. Asp-307 is a binding site for Mg(2+). Residues 339–345 (HGTAPKY), Asn-352, Tyr-390, and Arg-394 contribute to the NADP(+) site.

The protein belongs to the isocitrate and isopropylmalate dehydrogenases family. As to quaternary structure, homodimer. Requires Mg(2+) as cofactor. Mn(2+) is required as a cofactor.

The catalysed reaction is D-threo-isocitrate + NADP(+) = 2-oxoglutarate + CO2 + NADPH. In terms of biological role, catalyzes the oxidative decarboxylation of isocitrate to 2-oxoglutarate and carbon dioxide with the concomitant reduction of NADP(+). This chain is Isocitrate dehydrogenase [NADP] 1, found in Colwellia maris.